Reading from the N-terminus, the 432-residue chain is Mitochondrial distribution and morphology protein 12 (432 aa).

Residues 1–432 (MSIEVDWRAA…VFPSFWTFLI (432 aa)) enclose the SMP-LTD domain. 2 disordered regions span residues 182-273 (WTDP…PRMR) and 354-377 (QQEA…PKRQ). Low complexity predominate over residues 214–234 (TSNPTSRPSTSSTLPSHPSAS). Basic and acidic residues-rich tracts occupy residues 243–253 (TGKEHGSLAED) and 355–364 (QEARGQDDRP).

It belongs to the MDM12 family. In terms of assembly, component of the ER-mitochondria encounter structure (ERMES) or MDM complex, composed of mmm1, mdm10, mdm12 and mdm34. A mmm1 homodimer associates with one molecule of mdm12 on each side in a pairwise head-to-tail manner, and the SMP-LTD domains of mmm1 and mdm12 generate a continuous hydrophobic tunnel for phospholipid trafficking.

Its subcellular location is the mitochondrion outer membrane. It is found in the endoplasmic reticulum membrane. Component of the ERMES/MDM complex, which serves as a molecular tether to connect the endoplasmic reticulum (ER) and mitochondria. Components of this complex are involved in the control of mitochondrial shape and protein biogenesis, and function in nonvesicular lipid trafficking between the ER and mitochondria. Mdm12 is required for the interaction of the ER-resident membrane protein mmm1 and the outer mitochondrial membrane-resident beta-barrel protein mdm10. The mdm12-mmm1 subcomplex functions in the major beta-barrel assembly pathway that is responsible for biogenesis of all mitochondrial outer membrane beta-barrel proteins, and acts in a late step after the SAM complex. The mdm10-mdm12-mmm1 subcomplex further acts in the TOM40-specific pathway after the action of the mdm12-mmm1 complex. Essential for establishing and maintaining the structure of mitochondria and maintenance of mtDNA nucleoids. In Aspergillus oryzae (strain ATCC 42149 / RIB 40) (Yellow koji mold), this protein is Mitochondrial distribution and morphology protein 12.